We begin with the raw amino-acid sequence, 2395 residues long: Centrosomal protein of 295 kDa (2395 aa).

The segment at methionine 1–proline 540 is necessary for centriole targeting and microtubule association. The residue at position 13 (serine 13) is a Phosphoserine. 5 coiled-coil regions span residues glutamine 53–leucine 84, alanine 114–alanine 148, aspartate 209–threonine 277, alanine 488–valine 538, and glutamine 567–glutamate 592. Disordered stretches follow at residues leucine 602–proline 643, glycine 660–arginine 681, and serine 735–glutamate 764. The residue at position 634 (serine 634) is a Phosphoserine. The segment covering serine 735–serine 750 has biased composition (low complexity). Residues glycine 817–threonine 848 adopt a coiled-coil conformation. Disordered stretches follow at residues serine 864 to asparagine 893, alanine 966 to leucine 986, and valine 1212 to threonine 1272. The span at phenylalanine 1219 to serine 1250 shows a compositional bias: polar residues. Residues histidine 1444 to isoleucine 1488 are a coiled coil. Residue serine 1565 is modified to Phosphoserine. Over residues proline 1677–glycine 1692 the composition is skewed to low complexity. 5 disordered regions span residues proline 1677–lysine 1715, serine 1819–glutamate 1845, glutamate 1875–serine 1899, aspartate 1989–lysine 2013, and asparagine 2354–isoleucine 2395. Positions histidine 1697–serine 1710 are enriched in basic and acidic residues. Residues glutamine 1880–glutamate 1894 are compositionally biased toward basic and acidic residues. The tract at residues serine 2329–isoleucine 2395 is ALMS motif. The segment covering histidine 2376 to lysine 2388 has biased composition (basic and acidic residues).

In terms of assembly, interacts (via ALMS motif) with microtubules; this interaction is direct.

The protein resides in the cytoplasm. Its subcellular location is the cytoskeleton. It is found in the microtubule organizing center. It localises to the centrosome. The protein localises to the centriole. The protein resides in the spindle. Centriole-enriched microtubule-binding protein involved in centriole biogenesis. Essential for the generation of the distal portion of new-born centrioles in a CPAP- and CEP120-mediated elongation dependent manner during the cell cycle S/G2 phase after formation of the initiating cartwheel structure. Required for the recruitment of centriolar proteins, such as POC1B, POC5 and CEP135, into the distal portion of centrioles. Also required for centriole-to-centrosome conversion during mitotic progression, but is dispensable for cartwheel removal or centriole disengagement. Binds to and stabilizes centriolar microtubule. May be involved in ciliogenesis. This is Centrosomal protein of 295 kDa from Rattus norvegicus (Rat).